The primary structure comprises 356 residues: Putative methylthioribose-1-phosphate isomerase (356 aa).

Substrate is bound by residues 57–59 (RGA), Arg-100, and Gln-206. The Proton donor role is filled by Asp-247. Residue 257 to 258 (NK) participates in substrate binding.

The protein belongs to the eIF-2B alpha/beta/delta subunits family. MtnA subfamily.

The enzyme catalyses 5-(methylsulfanyl)-alpha-D-ribose 1-phosphate = 5-(methylsulfanyl)-D-ribulose 1-phosphate. Its function is as follows. Catalyzes the interconversion of methylthioribose-1-phosphate (MTR-1-P) into methylthioribulose-1-phosphate (MTRu-1-P). This is Putative methylthioribose-1-phosphate isomerase (aIF-2BI) from Pyrococcus abyssi (strain GE5 / Orsay).